The sequence spans 413 residues: Serine hydroxymethyltransferase (413 aa).

(6S)-5,6,7,8-tetrahydrofolate-binding positions include Leu117 and 121-123; that span reads GHL. At Lys226 the chain carries N6-(pyridoxal phosphate)lysine. (6S)-5,6,7,8-tetrahydrofolate is bound by residues Glu241 and 349-351; that span reads SPF.

Belongs to the SHMT family. As to quaternary structure, homodimer. Requires pyridoxal 5'-phosphate as cofactor.

Its subcellular location is the cytoplasm. It catalyses the reaction (6R)-5,10-methylene-5,6,7,8-tetrahydrofolate + glycine + H2O = (6S)-5,6,7,8-tetrahydrofolate + L-serine. Its pathway is one-carbon metabolism; tetrahydrofolate interconversion. The protein operates within amino-acid biosynthesis; glycine biosynthesis; glycine from L-serine: step 1/1. Functionally, catalyzes the reversible interconversion of serine and glycine with tetrahydrofolate (THF) serving as the one-carbon carrier. This reaction serves as the major source of one-carbon groups required for the biosynthesis of purines, thymidylate, methionine, and other important biomolecules. Also exhibits THF-independent aldolase activity toward beta-hydroxyamino acids, producing glycine and aldehydes, via a retro-aldol mechanism. The polypeptide is Serine hydroxymethyltransferase (Halalkalibacterium halodurans (strain ATCC BAA-125 / DSM 18197 / FERM 7344 / JCM 9153 / C-125) (Bacillus halodurans)).